A 65-amino-acid chain; its full sequence is Defensin-B2 (65 aa).

Positions 1-23 (MEARVLLLCAVLFLLVHTPPAAG) are cleaved as a signal peptide. 3 disulfides stabilise this stretch: Cys29-Cys56, Cys36-Cys50, and Cys40-Cys57.

This sequence belongs to the beta-defensin family. Lowly expressed in spleen, and lung.

The protein resides in the secreted. In terms of biological role, has antimicrobial activity. This chain is Defensin-B2, found in Ornithorhynchus anatinus (Duckbill platypus).